A 117-amino-acid polypeptide reads, in one-letter code: uncharacterized protein (117 aa).

Belongs to the transposase 34 family.

This is an uncharacterized protein from Sinorhizobium fredii (strain NBRC 101917 / NGR234).